We begin with the raw amino-acid sequence, 636 residues long: Putative cysteine-rich receptor-like protein kinase 33 (636 aa).

Positions 1-25 (MRKTKKISFLIFWVVLISIIGAISS) are cleaved as a signal peptide. Gnk2-homologous domains lie at 26 to 128 (QQCN…NSSF) and 138 to 245 (YMEH…LYPF). Residues 26-266 (QQCNETGYFE…PGSKRNISVG (241 aa)) lie on the Extracellular side of the membrane. 10 N-linked (GlcNAc...) asparagine glycosylation sites follow: Asn-29, Asn-63, Asn-105, Asn-125, Asn-149, Asn-173, Asn-185, Asn-188, Asn-250, and Asn-262. The helical transmembrane segment at 267 to 287 (FFVAIVVATGVVISVLSTLVV) threads the bilayer. The Cytoplasmic portion of the chain corresponds to 288–636 (VLVCRKRKTD…DSLIDDLVPR (349 aa)). Residues 321–600 (FSKCNMLGQG…MMLTSNSITL (280 aa)) form the Protein kinase domain. ATP-binding positions include 327 to 335 (LGQGGFGEV) and Lys-349. Phosphotyrosine is present on Tyr-394. The active-site Proton acceptor is Asp-446. Phosphoserine is present on Ser-450. Thr-486 is subject to Phosphothreonine. A Phosphotyrosine modification is found at Tyr-494.

This sequence belongs to the protein kinase superfamily. Ser/Thr protein kinase family. CRK subfamily.

It localises to the membrane. The catalysed reaction is L-seryl-[protein] + ATP = O-phospho-L-seryl-[protein] + ADP + H(+). It catalyses the reaction L-threonyl-[protein] + ATP = O-phospho-L-threonyl-[protein] + ADP + H(+). This chain is Putative cysteine-rich receptor-like protein kinase 33 (CRK33), found in Arabidopsis thaliana (Mouse-ear cress).